Here is a 228-residue protein sequence, read N- to C-terminus: 2,3-bisphosphoglycerate-dependent phosphoglycerate mutase (228 aa).

Substrate-binding positions include 8–15 (RHGQSEWN), 21–22 (TG), R60, 87–90 (ERHY), K98, 114–115 (RR), and 183–184 (GN). H9 serves as the catalytic Tele-phosphohistidine intermediate. The active-site Proton donor/acceptor is E87.

This sequence belongs to the phosphoglycerate mutase family. BPG-dependent PGAM subfamily.

It carries out the reaction (2R)-2-phosphoglycerate = (2R)-3-phosphoglycerate. Its pathway is carbohydrate degradation; glycolysis; pyruvate from D-glyceraldehyde 3-phosphate: step 3/5. Functionally, catalyzes the interconversion of 2-phosphoglycerate and 3-phosphoglycerate. In Staphylococcus epidermidis (strain ATCC 35984 / DSM 28319 / BCRC 17069 / CCUG 31568 / BM 3577 / RP62A), this protein is 2,3-bisphosphoglycerate-dependent phosphoglycerate mutase.